Reading from the N-terminus, the 740-residue chain is MAAFSEMGVMPEIAQAVEEMDWLLPTDIQAESIPLILGGGDVLMAAETGSGKTGAFSIPVIQIVYETLKDQQEGKKGKATIKTGASVLNKWQMNPYDRGSAFAIGSDGLCCQSREVKEWHGCRATRGLLRGKHYYEVSCHDQGLCRVGWSTMQASLDLGTDKFGFGFGGTGKKSHNKQFDNYGEEFTMHDTIGCYLDIDKGHVKFSKNGKDLGLAFEIPAHIKNQALFPACVLKNAELKFNFGEEEFKFPPKDGFVALSKAPDSYVVKSQHTGNAQVSQTKFLPNAPKALIVEPSRELAEQTLNNVKQFKKYIDNPKLRELLIIGGVAARDQLSVLDNGVDIVVGTPGRLDDLVSTGKLNLSQVRFLVLDEADGLLSQGYSDFINRMHNQIPQITSDGKRLQVIVCSATLHSFDVKKLSEKIMHFPTWVDLKGEDSVPDTVHHVVVPVNPKTDRLWERLGKNHIRTDDVHAKDNTRPGANSPEMWSEAIKILKGEYAVRAIKEHKMDQAIIFCRTKIDCDNLEQYFMQQGGGPDKKGHQFSCVCLHGDRKPHERKQNLERFKKGDVRFLICTDVAARGIDIHGVPYVINVTLPDEKQNYVHRIGRVGRAERMGLAISLVATEKEKVWYHVCSNRGKGCYNTRLKEDGGCTIWYNEMQLLSEIEEHLNCTISQVEPDIKVPVDEFDGKVTYGQKRAAGGGNYKGHVDILAPTVQELAALEKEAQTSFLHLGYLPNQLFRTF.

Residues 1–295 (MAAFSEMGVM…APKALIVEPS (295 aa)) form a necessary for interaction with HNRNPK region. The segment at 1-448 (MAAFSEMGVM…DTVHHVVVPV (448 aa)) is interaction with dsRNA. The tract at residues 1–525 (MAAFSEMGVM…KIDCDNLEQY (525 aa)) is necessary for interaction with RELA. Residues 2-428 (AAFSEMGVMP…SEKIMHFPTW (427 aa)) form the Helicase ATP-binding domain. ATP is bound at residue 46–53 (AETGSGKT). The 178-residue stretch at 70–247 (DQQEGKKGKA…LKFNFGEEEF (178 aa)) folds into the B30.2/SPRY domain. N6-acetyllysine occurs at positions 239 and 268. Lysine 281 bears the N6-acetyllysine; alternate mark. Lysine 281 is covalently cross-linked (Glycyl lysine isopeptide (Lys-Gly) (interchain with G-Cter in SUMO2); alternate). Positions 370–373 (DEAD) match the DEAD box motif. Residue serine 481 is modified to Phosphoserine. The region spanning 493–681 (KGEYAVRAIK…QVEPDIKVPV (189 aa)) is the Helicase C-terminal domain. Residues 525-740 (YFMQQGGGPD…YLPNQLFRTF (216 aa)) are necessary for interaction with HNRNPK.

Belongs to the DEAD box helicase family. DDX1 subfamily. Found in a multi-helicase-TICAM1 complex at least composed of DHX36, DDX1, DDX21 and TICAM1; this complex exists in resting cells with or without poly(I:C) RNA ligand stimulation. Interacts with DHX36. Interacts (via B30.2/SPRY domain) with DDX21 (via N-terminus); this interaction serves as bridges to TICAM1. Interacts with FAM98A (via N- and C-terminus). Interacts with PHF5A (via C-terminus). Interacts with MBNL1. Interacts with CSTF2. Interacts with HNRNPK. Interacts with ATM. Interacts with RELA (via C-terminus). Component of the tRNA-splicing ligase complex. Interacts with PQBP1. Interacts with ERCC6. In terms of processing, phosphorylated by ATM kinase; phosphorylation is increased in response to ionizing radiation (IR).

It is found in the nucleus. It localises to the cytoplasm. The protein resides in the cytoplasmic granule. The protein localises to the cytosol. Its subcellular location is the mitochondrion. The catalysed reaction is ATP + H2O = ADP + phosphate + H(+). Functionally, acts as an ATP-dependent RNA helicase, able to unwind both RNA-RNA and RNA-DNA duplexes. Possesses 5' single-stranded RNA overhang nuclease activity. Possesses ATPase activity on various RNA, but not DNA polynucleotides. May play a role in RNA clearance at DNA double-strand breaks (DSBs), thereby facilitating the template-guided repair of transcriptionally active regions of the genome. Together with RELA, acts as a coactivator to enhance NF-kappa-B-mediated transcriptional activation. Acts as a positive transcriptional regulator of cyclin CCND2 expression. Binds to the cyclin CCND2 promoter region. Associates with chromatin at the NF-kappa-B promoter region via association with RELA. Binds to poly(A) RNA. May be involved in 3'-end cleavage and polyadenylation of pre-mRNAs. Component of the tRNA-splicing ligase complex required to facilitate the enzymatic turnover of catalytic subunit RTCB: together with archease (ZBTB8OS), acts by facilitating the guanylylation of RTCB, a key intermediate step in tRNA ligation. Component of a multi-helicase-TICAM1 complex that acts as a cytoplasmic sensor of viral double-stranded RNA (dsRNA) and plays a role in the activation of a cascade of antiviral responses including the induction of pro-inflammatory cytokines via the adapter molecule TICAM1. Specifically binds (via helicase ATP-binding domain) on both short and long poly(I:C) dsRNA. The chain is ATP-dependent RNA helicase DDX1 (Ddx1) from Rattus norvegicus (Rat).